A 339-amino-acid chain; its full sequence is Dihydroorotate dehydrogenase (quinone) (339 aa).

Residues 62–66 and T86 contribute to the FMN site; that span reads AGMDK. A substrate-binding site is contributed by K66. Residue 111–115 coordinates substrate; it reads NRMGF. 2 residues coordinate FMN: N139 and N172. Position 172 (N172) interacts with substrate. The Nucleophile role is filled by S175. N177 serves as a coordination point for substrate. FMN-binding residues include K217 and T245. 246-247 contributes to the substrate binding site; sequence NT. FMN is bound by residues G268, G297, and 318–319; that span reads YS.

The protein belongs to the dihydroorotate dehydrogenase family. Type 2 subfamily. In terms of assembly, monomer. Requires FMN as cofactor.

The protein resides in the cell membrane. The catalysed reaction is (S)-dihydroorotate + a quinone = orotate + a quinol. Its pathway is pyrimidine metabolism; UMP biosynthesis via de novo pathway; orotate from (S)-dihydroorotate (quinone route): step 1/1. In terms of biological role, catalyzes the conversion of dihydroorotate to orotate with quinone as electron acceptor. The sequence is that of Dihydroorotate dehydrogenase (quinone) from Shewanella pealeana (strain ATCC 700345 / ANG-SQ1).